The chain runs to 169 residues: Phosphopantetheine adenylyltransferase (169 aa).

Residue threonine 14 participates in substrate binding. ATP is bound by residues 14-15 (TF) and histidine 22. Residues lysine 46, leucine 78, and arginine 92 each coordinate substrate. Residues 93-95 (GLR), glutamate 103, and 128-134 (HSFISSS) each bind ATP.

It belongs to the bacterial CoaD family. As to quaternary structure, homohexamer. Requires Mg(2+) as cofactor.

The protein localises to the cytoplasm. The catalysed reaction is (R)-4'-phosphopantetheine + ATP + H(+) = 3'-dephospho-CoA + diphosphate. It participates in cofactor biosynthesis; coenzyme A biosynthesis; CoA from (R)-pantothenate: step 4/5. Functionally, reversibly transfers an adenylyl group from ATP to 4'-phosphopantetheine, yielding dephospho-CoA (dPCoA) and pyrophosphate. This Stenotrophomonas maltophilia (strain R551-3) protein is Phosphopantetheine adenylyltransferase.